We begin with the raw amino-acid sequence, 492 residues long: GPI alpha-1,6-mannosyltransferase 2 (492 aa).

At 1-13 (MGLLDPSQKEVLK) the chain is on the cytoplasmic side. Residues 14 to 34 (FAVSCRILTLVLQALFNIIIP) traverse the membrane as a helical segment. Residues 35 to 77 (DHHADAFSPPRLAPSGSVDQLVEALLGGLSRWDAEHFLFIAEH) lie on the Lumenal side of the membrane. Residues 78 to 98 (GYLYEHNFAFFPGFPLALLMG) form a helical membrane-spanning segment. Residues 99 to 113 (TELLRPLQGLLSERS) are Cytoplasmic-facing. The helical transmembrane segment at 114 to 134 (CLLVSVALLNSLFSVLAAVAL) threads the bilayer. At 135 to 136 (HD) the chain is on the lumenal side. A helical membrane pass occupies residues 137–157 (LGCLVLHCPRQAFCAALLFCL). The Cytoplasmic portion of the chain corresponds to 158-161 (SPAN). Residues 162–182 (VFLAAGYSEALFAFLTFSAMG) traverse the membrane as a helical segment. Residues 183 to 192 (QLERGRGWAS) lie on the Lumenal side of the membrane. Residues 193-213 (GLLFALAAGVRSNGLVSVGFL) traverse the membrane as a helical segment. Residues 214–234 (LHSQCRGFCSSLVVLDPLKGL) are Cytoplasmic-facing. The chain crosses the membrane as a helical span at residues 235–255 (VKLMASLCLSVLTVSLPFALF). Residues 256–327 (QYYAYTQFCF…RYYELRQVPN (72 aa)) lie on the Lumenal side of the membrane. A helical transmembrane segment spans residues 328-348 (FLLATPVTVLVVWATWTYVTA). Residues 349–378 (HPWLCLTLGLQRTKDRESLEKPHPGFLSAK) lie on the Cytoplasmic side of the membrane. A helical transmembrane segment spans residues 379-399 (VFVYLVHAAALLAFGGLCMHV). At 400–468 (QVLTRLLGSS…NWKTCSPVTK (69 aa)) the chain is on the lumenal side. The chain crosses the membrane as a helical span at residues 469 to 489 (CILVYFLTYWLLGLIMHCNFL). The Cytoplasmic segment spans residues 490-492 (PWT).

Belongs to the PIGV family. Post-translationally, not N-glycosylated.

The protein resides in the endoplasmic reticulum membrane. It functions in the pathway glycolipid biosynthesis; glycosylphosphatidylinositol-anchor biosynthesis. Alpha-1,6-mannosyltransferase that catalyzes the transfer of the second mannose, via an alpha-1,6 bond, from a dolichol-phosphate-mannose (Dol-P-Man) to the alpha-D-Man-(1-&gt;4)-alpha-D-GlcN-(1-&gt;6)-(1-radyl,2-acyl-sn-glycero-3-phospho)-2-acyl-inositol (also termed H2) intermediate to generate an alpha-D-Man-(1-&gt;6)-alpha-D-Man-(1-&gt;4)-alpha-D-GlcN-(1-&gt;6)-(1-radyl,2-acyl-sn-glycero-3-phospho)-2-acyl-inositol (also termed H3) and participates in the seventh step of the glycosylphosphatidylinositol-anchor biosynthesis. Also transfers the second mannose on a 2-PEtn-alpha-D-Man-(1-&gt;4)-alpha-D-GlcN-(1-&gt;6)-(1-radyl,2-acyl-sn-glycero-3-phospho)-2-acyl-inositol (also termed H5). This is GPI alpha-1,6-mannosyltransferase 2 from Rattus norvegicus (Rat).